Consider the following 406-residue polypeptide: Proteasome-activating nucleotidase 1 (406 aa).

Residues 13-72 adopt a coiled-coil conformation; sequence YDKDSASQQEKITALQERLEVLETQNEEMRDKLLDTNAENNKYQQKLERLTHENKKLKQS. ATP is bound by residues 194–199 and His-333; that span reads GTGKTM. The segment at 404–406 is docks into pockets in the proteasome alpha-ring to cause gate opening; the sequence is AFA.

The protein belongs to the AAA ATPase family. Homododecamer, in a proposed two stacked hexameric ring configuration, but may also form homohexamer. The hexameric complex has likely a two-ring architecture resembling a top hat that caps the 20S proteasome core at one or both ends. Upon ATP-binding, the C-terminus of PAN probably interacts with the alpha-rings of the proteasome core by binding to the intersubunit pockets. Interacts with SAMP1-MoaE conjugate in vitro, but does not bind to SAMP1 or MoaE alone. Interacts with NcsA.

It is found in the cytoplasm. ATPase activity is inhibited by EDTA in vitro. ATPase which is responsible for recognizing, binding, unfolding and translocation of substrate proteins into the archaeal 20S proteasome core particle. Is essential for opening the gate of the 20S proteasome via an interaction with its C-terminus, thereby allowing substrate entry and access to the site of proteolysis. Thus, the C-terminus of the proteasomal ATPase functions like a 'key in a lock' to induce gate opening and therefore regulate proteolysis. Unfolding activity requires energy from ATP hydrolysis, whereas ATP binding alone promotes ATPase-20S proteasome association which triggers gate opening, and supports translocation of unfolded substrates. Is also able to cleave other nucleoside triphosphates including GTP and TTP, but the rate of hydrolysis is 4- to 5-fold slower than for ATP. This Haloferax volcanii (strain ATCC 29605 / DSM 3757 / JCM 8879 / NBRC 14742 / NCIMB 2012 / VKM B-1768 / DS2) (Halobacterium volcanii) protein is Proteasome-activating nucleotidase 1.